The sequence spans 647 residues: Denticleless protein homolog (647 aa).

WD repeat units lie at residues 48–88, 95–134, 137–177, 209–248, 264–303, 308–349, and 353–393; these read AAAV…KQSS, AHDN…LLGT, GHQC…KDGF, DSQQ…TAYH, TRKL…TTPV, GHSN…QAPM, and GHSQ…EGEN. 2 short sequence motifs (DDB1-binding motif) span residues 167 to 170 and 238 to 241; these read WDTR and WDLR. 2 disordered regions span residues 410–487 and 534–647; these read QSPN…SKSP and KRSR…RTQD. Polar residues-rich tracts occupy residues 426–443 and 471–486; these read PSKN…SPQP and KMPS…SSKS. Residues 543–558 are compositionally biased toward basic and acidic residues; sequence LKKEDSFGLESEKRLG. The span at 586-600 shows a compositional bias: low complexity; sequence KGSAQPKSPSSGSSQ.

This sequence belongs to the WD repeat cdt2 family. In terms of assembly, component of the DCX(DTL) E3 ubiquitin ligase complex, at least composed of cul4 (cul4a or cul4b), ddb1, dtl/cdt2 and rbx1.

The protein resides in the nucleus. The protein localises to the cytoplasm. It localises to the cytoskeleton. It is found in the microtubule organizing center. Its subcellular location is the centrosome. The protein resides in the chromosome. It functions in the pathway protein modification; protein ubiquitination. Its function is as follows. Substrate-specific adapter of a DCX (DDB1-CUL4-X-box) E3 ubiquitin-protein ligase complex required for cell cycle control, DNA damage response and translesion DNA synthesis. The DCX(DTL) complex, also named CRL4(CDT2) complex, mediates the polyubiquitination and subsequent degradation of CDT1, CDKN1A/p21(CIP1), KMT5A and SDE2. CDT1 degradation in response to DNA damage is necessary to ensure proper cell cycle regulation of DNA replication. CDKN1A/p21(CIP1) degradation during S phase or following UV irradiation is essential to control replication licensing. KMT5A degradation is also important for a proper regulation of mechanisms such as TGF-beta signaling, cell cycle progression, DNA repair and cell migration. Most substrates require their interaction with PCNA for their polyubiquitination: substrates interact with PCNA via their PIP-box, and those containing the 'K+4' motif in the PIP box, recruit the DCX(DTL) complex, leading to their degradation. In undamaged proliferating cells, the DCX(DTL) complex also promotes the 'Lys-164' monoubiquitination of PCNA, thereby being involved in PCNA-dependent translesion DNA synthesis. May play a role in the regulation of the circadian clock. In Danio rerio (Zebrafish), this protein is Denticleless protein homolog (dtl).